Consider the following 659-residue polypeptide: Fructose-1,6-bisphosphatase class 3 (659 aa).

This sequence belongs to the FBPase class 3 family. The cofactor is Mn(2+).

The enzyme catalyses beta-D-fructose 1,6-bisphosphate + H2O = beta-D-fructose 6-phosphate + phosphate. The protein operates within carbohydrate biosynthesis; gluconeogenesis. In Clostridium botulinum (strain Alaska E43 / Type E3), this protein is Fructose-1,6-bisphosphatase class 3.